Reading from the N-terminus, the 319-residue chain is MTNSSTFCPVYRDLEPFTYFFYLVFLIGIIGSCFATWAFIQKNTNHRCVSIYLINLLTADFLLTLALPVKITVDLGVAPWKLRIFHCQVTACLIYINMYLSIIFLAFVSIDRCLQLTYSCKIYRIQEPGFAKMISAVVWLMVLLIMVPNMIIPIKDIKEKPNVGCMEFKSEFGRNWHLLTNFISIAIFFNFSAIILISNCLVIRQLYRNKDNENYPNVKRALISILLVTTGYIICFVPYHIVRIPYTLSQTEVISDCSTRISLFKAKEATLLLAVSNLCFDPILYYHLSKAFRLKITETFASHKESKAQKEKPRSENNA.

Over 1–21 (MTNSSTFCPVYRDLEPFTYFF) the chain is Extracellular. N3 carries N-linked (GlcNAc...) asparagine glycosylation. Residues 22–42 (YLVFLIGIIGSCFATWAFIQK) traverse the membrane as a helical segment. Topologically, residues 43-48 (NTNHRC) are cytoplasmic. The chain crosses the membrane as a helical span at residues 49–69 (VSIYLINLLTADFLLTLALPV). The Extracellular portion of the chain corresponds to 70–89 (KITVDLGVAPWKLRIFHCQV). Residues 90–110 (TACLIYINMYLSIIFLAFVSI) traverse the membrane as a helical segment. At 111 to 132 (DRCLQLTYSCKIYRIQEPGFAK) the chain is on the cytoplasmic side. The helical transmembrane segment at 133-153 (MISAVVWLMVLLIMVPNMIIP) threads the bilayer. Residues 154-181 (IKDIKEKPNVGCMEFKSEFGRNWHLLTN) are Extracellular-facing. Residues 182 to 202 (FISIAIFFNFSAIILISNCLV) form a helical membrane-spanning segment. The Cytoplasmic segment spans residues 203-224 (IRQLYRNKDNENYPNVKRALIS). A helical transmembrane segment spans residues 225–245 (ILLVTTGYIICFVPYHIVRIP). The Extracellular portion of the chain corresponds to 246–268 (YTLSQTEVISDCSTRISLFKAKE). The helical transmembrane segment at 269–289 (ATLLLAVSNLCFDPILYYHLS) threads the bilayer. Topologically, residues 290 to 319 (KAFRLKITETFASHKESKAQKEKPRSENNA) are cytoplasmic.

The protein belongs to the G-protein coupled receptor 1 family.

Its subcellular location is the cell membrane. Functionally, G-protein coupled receptor for Big LEN, a 16-amino acid neuropeptide produced from the precursor protein, proSAAS (encoded by PCSK1N). Acts through a G(i)-alpha-mediated pathway in response to bigLEN. Big LEN-GPR171 system plays an important role in regulating feeding and metabolism. Also plays a role in modulating fear and anxiety-like behaviors in the basolateral amygdala. Big LEN-GPR171 modulates the mu-type opioid receptor signaling and antinociception. Acts as a negative regulator T cell function. This chain is G-protein coupled receptor 171 (GPR171), found in Bos taurus (Bovine).